We begin with the raw amino-acid sequence, 626 residues long: Colicin-Ia (626 aa).

The translocation (T) stretch occupies residues 23-225 (EIMAVDIYVN…TRLSELEKNG (203 aa)). The segment covering 276-286 (QQLTQQKNTPD) has biased composition (polar residues). Residues 276-308 (QQLTQQKNTPDGKTIVSPEKFPGRSSTNHSIVV) are disordered. The interval 282-385 (KNTPDGKTIV…LRQRLLDARN (104 aa)) is receptor-binding (R). The channel (C) stretch occupies residues 450–626 (KDAINFTTEF…VEKANKFWGI (177 aa)). 2 helical membrane passes run 580-594 (ATAL…LTGS) and 597-612 (GIIG…GALI).

The protein belongs to the channel forming colicin family.

Its subcellular location is the cell membrane. This colicin is a channel-forming colicin. This class of transmembrane toxins depolarize the cytoplasmic membrane, leading to dissipation of cellular energy. Its function is as follows. Colicins are polypeptide toxins produced by and active against E.coli and closely related bacteria. This Escherichia coli protein is Colicin-Ia (cia).